The sequence spans 276 residues: Protein G1 (276 aa).

Disordered regions lie at residues 1 to 30 (MSSS…SQKR) and 178 to 213 (SYHK…ATAP). A compositionally biased stretch (basic and acidic residues) spans 21–30 (RPSRYESQKR). Positions 24–183 (RYESQKRRDW…ARGISYHKKK (160 aa)) constitute an ALOG domain. Over residues 178–187 (SYHKKKKRRG) the composition is skewed to basic residues. A Nuclear localization signal motif is present at residues 181–185 (KKKKR). Over residues 189–202 (NMNGARGGGGGGAR) the composition is skewed to gly residues. Residues 203–213 (AGVNDGDATAP) are compositionally biased toward low complexity.

The protein belongs to the plant homeotic and developmental regulators ALOG protein family. As to expression, expressed at the empty glumes of immature spikelets, which are lemmas of the sterile florets located at the lateral side of the spikelet, throughout their development.

It is found in the nucleus. Functionally, probable transcription regulator that acts as a developmental regulator by promoting cell growth in response to light. Transcription regulator that restrains empty glumes growth, lemmas of the sterile florets located at the lateral side of the rice spikelet, to maintain their small size, probably by repressing lemma identity via transcription regulation. In Oryza sativa subsp. japonica (Rice), this protein is Protein G1 (G1).